Consider the following 166-residue polypeptide: Regulatory protein RecX (166 aa).

Belongs to the RecX family.

The protein localises to the cytoplasm. Modulates RecA activity. This chain is Regulatory protein RecX, found in Shigella boydii serotype 4 (strain Sb227).